Reading from the N-terminus, the 66-residue chain is Large ribosomal subunit protein bL32 (66 aa).

The protein belongs to the bacterial ribosomal protein bL32 family.

This chain is Large ribosomal subunit protein bL32, found in Rickettsia akari (strain Hartford).